The chain runs to 281 residues: 4-diphosphocytidyl-2-C-methyl-D-erythritol kinase (281 aa).

K15 is an active-site residue. 98–108 (PTGAGLGGGSS) is an ATP binding site. The active site involves D140.

Belongs to the GHMP kinase family. IspE subfamily.

It catalyses the reaction 4-CDP-2-C-methyl-D-erythritol + ATP = 4-CDP-2-C-methyl-D-erythritol 2-phosphate + ADP + H(+). The protein operates within isoprenoid biosynthesis; isopentenyl diphosphate biosynthesis via DXP pathway; isopentenyl diphosphate from 1-deoxy-D-xylulose 5-phosphate: step 3/6. Its function is as follows. Catalyzes the phosphorylation of the position 2 hydroxy group of 4-diphosphocytidyl-2C-methyl-D-erythritol. This Neisseria meningitidis serogroup C (strain 053442) protein is 4-diphosphocytidyl-2-C-methyl-D-erythritol kinase.